The sequence spans 359 residues: UPF0283 membrane protein RHE_CH02332 (359 aa).

Positions 1–61 are disordered; it reads MSKPPSDLPR…EDPFINPDRD (61 aa). 2 consecutive transmembrane segments (helical) span residues 77–97 and 111–131; these read FGKIALAAFGILLSLGIGLWT and LGYAALGVLAIGILAVLALVI.

The protein belongs to the UPF0283 family.

Its subcellular location is the cell inner membrane. This Rhizobium etli (strain ATCC 51251 / DSM 11541 / JCM 21823 / NBRC 15573 / CFN 42) protein is UPF0283 membrane protein RHE_CH02332.